Consider the following 372-residue polypeptide: Cytochrome b (372 aa).

4 consecutive transmembrane segments (helical) span residues 25–45 (FGSM…FLAI), 69–90 (WIMQ…YTHI), 105–125 (WLSG…GYVL), and 170–190 (FFAL…IHIM). The heme b site is built by His75 and His89. 2 residues coordinate heme b: His174 and His188. His193 is a binding site for a ubiquinone. Transmembrane regions (helical) follow at residues 218-238 (YKDM…MSFM), 280-300 (LGGT…PFTH), 312-332 (ITQV…WTAT), and 339-358 (FILI…IIHP).

This sequence belongs to the cytochrome b family. The cytochrome bc1 complex contains 3 respiratory subunits (MT-CYB, CYC1 and UQCRFS1), 2 core proteins (UQCRC1 and UQCRC2) and probably 6 low-molecular weight proteins. Heme b serves as cofactor.

Its subcellular location is the mitochondrion inner membrane. In terms of biological role, component of the ubiquinol-cytochrome c reductase complex (complex III or cytochrome b-c1 complex) that is part of the mitochondrial respiratory chain. The b-c1 complex mediates electron transfer from ubiquinol to cytochrome c. Contributes to the generation of a proton gradient across the mitochondrial membrane that is then used for ATP synthesis. The sequence is that of Cytochrome b (MT-CYB) from Pseudechis australis (Mulga snake).